A 66-amino-acid chain; its full sequence is Alpha-conotoxin Vc1a (66 aa).

The first 25 residues, 1–25 (MGMRMMFTVFLLVVLATTVVSSTSG), serve as a signal peptide directing secretion. A propeptide spanning residues 26–47 (RREFRGRNAAAKASDLVSLTDK) is cleaved from the precursor. Disulfide bonds link C51/C57 and C52/C65. Positions 53-55 (SDP) are ser-Xaa-Pro motif, crucial for potent interaction with nAChR. Key region for inhibition of alpha-9-alpha-10/CHRNA9-CHRNA10 nAChR regions lie at residues 54-56 (DPR) and 60-64 (DHPEI). Residue P55 is modified to 4-hydroxyproline. E63 is subject to 4-carboxyglutamate. Residue C65 is modified to Cysteine amide.

It belongs to the conotoxin A superfamily. Post-translationally, vc1.1 is described as having no post-translational modifications (except C-terminal amidation), whereas Vc1a contains a hydroxyproline at Pro-55 and a 4-carboxyglutamate at Glu-63 (and a C-terminal amidation). In terms of processing, hydroxylation of Pro-55 is not important for inhibition of alpha-9-alpha-10/CHRNA9-CHRNA10 nAChRs, since [P6O]Vc1.1 (Pro-55 hydroxylated) shows similar inhibition than native toxin (IC(50)=99.1 nM). In contrast, hydroxylation of Pro-55 seems to impair inhibition of HVA calcium channel currents, since [P6O]Vc1.1 has no effect on HVA calcium channel currents. In vivo, hydroxylation of Pro-55 seems to induce the loss of analgesic effects in rat models of neuropathic pain, since [P6O]Vc1.1 has no effect on mechanical allodynia. Gamma-carboxylation of Glu-63 is not important for inhibition of alpha-9-alpha-10/CHRNA9-CHRNA10 nAChRs, since [E14gamma]Vc1.1 (carboxyglutamate at Glu-63) shows similar inhibition than native toxin (IC(50)=65.3 nM). In contrast, gamma-carboxylation of Glu-63 seems to impair inhibition of HVA calcium channel currents, since [E14gamma]Vc1.1 has no effect on HVA calcium channel currents. Post-translationally, non-native isomers 'ribbon' (with disulfide connectivity C1-C4; C2-C3) and 'beads' (with disulfide connectivity C1-C2; C3-C4) of Vc1.1 also inhibit HVA calcium channel currents in rat DRG neurons (20-30% inhibition at 1 uM toxin). It has been shown that both reduced and alkylated Vc1.1 have no effect on HVA calcium channel currents. The observed activity can be attributed to specific isomers. In terms of processing, [C3S]Vc1.1(1-8) mutant is C-terminally amidated. As to expression, expressed by the venom duct.

Its subcellular location is the secreted. Its function is as follows. Alpha-conotoxins act on postsynaptic membranes, they bind to the nicotinic acetylcholine receptors (nAChR) and thus inhibit them. This toxin (native toxin Vc1a; hydroxylated and gamma-carboxylated) blocks alpha-9-alpha-10/CHRNA9-CHRNA10 nAChRs (IC(50)=62.9 nM). In contrast to the non-post-translationally modified analog Vc1.1, Vc1a does not inhibit high voltage-activated (HVA) calcium channel currents. In vivo, in contrast to Vc1.1, Vc1a does not show analgesic effects in rat models of neuropathic pain. Functionally, the synthetic peptide Vc1.1 (a non-hydroxylated and non-gamma-carboxylated analog of Vc1a) has two types of targets. It blocks alpha-9-alpha-10/CHRNA9-CHRNA10 nAChRs (on rat receptors, IC(50)=19-109 nM) (with preference for rat over human receptors) and inhibits high voltage-activated (HVA) calcium channel (Cav2.2, Cav2.3) currents by acting on GABA(B) receptors (GABBR1 and GABBR2) (IC(50)=1.7 nM). It also shows moderate inhibition on alpha-6/alpha-3-beta-2-beta-3 (CHRNA6/CHRNA3-CHRNB2-CHRNB3) (IC(50)=140 nM) and alpha-6/alpha-3-beta-4 (CHRNA6/CHRNA3-CHRNB4) (IC(50)=980 nM). On alpha-9-alpha-10/CHRNA9-CHRNA10 nAChR, it most likely interacts with the alpha-10(+)/alpha-9(-)interface of the receptor. In vivo, it acts as a powerful analgesic in rat models of neuropathic pain. This is Alpha-conotoxin Vc1a from Conus victoriae (Queen Victoria cone).